A 140-amino-acid polypeptide reads, in one-letter code: MALERTFSMIKPDATRRNLTGAITKMLEDAGLRVIASRRVWMSRREAEGFYAVHKDRPFFGELVEFMSSAPTIVQVLEGENAIARNREVMGATNPANAAEGTIRKVHALSIGENSVHGSDAPETAAQEIKYWFSDTEIVG.

Positions 11, 59, 87, 93, 104, and 114 each coordinate ATP. Residue His-117 is the Pros-phosphohistidine intermediate of the active site.

It belongs to the NDK family. As to quaternary structure, homotetramer. It depends on Mg(2+) as a cofactor.

The protein localises to the cytoplasm. The catalysed reaction is a 2'-deoxyribonucleoside 5'-diphosphate + ATP = a 2'-deoxyribonucleoside 5'-triphosphate + ADP. It catalyses the reaction a ribonucleoside 5'-diphosphate + ATP = a ribonucleoside 5'-triphosphate + ADP. Major role in the synthesis of nucleoside triphosphates other than ATP. The ATP gamma phosphate is transferred to the NDP beta phosphate via a ping-pong mechanism, using a phosphorylated active-site intermediate. This Mesorhizobium japonicum (strain LMG 29417 / CECT 9101 / MAFF 303099) (Mesorhizobium loti (strain MAFF 303099)) protein is Nucleoside diphosphate kinase.